Here is a 92-residue protein sequence, read N- to C-terminus: Small ribosomal subunit protein uS19c (92 aa).

Belongs to the universal ribosomal protein uS19 family.

It localises to the plastid. The protein resides in the chloroplast. Functionally, protein S19 forms a complex with S13 that binds strongly to the 16S ribosomal RNA. This is Small ribosomal subunit protein uS19c from Oedogonium cardiacum (Filamentous green alga).